Consider the following 324-residue polypeptide: Probable nicotianamine synthase 4 (324 aa).

The protein belongs to the nicotianamine synthase (NAS)-like family.

The enzyme catalyses 3 S-adenosyl-L-methionine = nicotianamine + 3 S-methyl-5'-thioadenosine + 3 H(+). Functionally, synthesizes nicotianamine, a polyamine which serves as a sensor for the physiological iron status within the plant, and/or might be involved in the transport of iron. This is Probable nicotianamine synthase 4 (NAS4) from Arabidopsis thaliana (Mouse-ear cress).